Consider the following 640-residue polypeptide: Putative GTPase-activating protein C1620.12c (640 aa).

Residues 96–120 form a disordered region; it reads QPLQGHSPVPSFMSTASTNISSSKI. Over residues 109 to 120 the composition is skewed to low complexity; sequence STASTNISSSKI. One can recognise a Rab-GAP TBC domain in the interval 215–408; that stretch reads CIPSPCRKLV…RLMDLIAIYG (194 aa). Residues 500–636 adopt a coiled-coil conformation; the sequence is RQNNLEELKN…LQTKWKSVSE (137 aa).

The protein belongs to the GYP5 family.

It is found in the nucleus. Its subcellular location is the cytoplasm. This Schizosaccharomyces pombe (strain 972 / ATCC 24843) (Fission yeast) protein is Putative GTPase-activating protein C1620.12c.